The sequence spans 306 residues: MSNEFINFEKISRESWKTLHQKAKALLTQEELKSITSLNDNISINDVIDIYLPLINLIQVYKIAQENLSFSKSLFLKKDIQLRPFIIGISGSVAVGKSTTSRLLQLLLSRTHPNSQVELVTTDGFLYPNQFLIEQGLLNRKGFPESYNMELLLDFLDSIKNGQTAFAPVYSHDIYDIIPNQKQSFNNPDFLIVEGINVFQNQQNNRLYMSDYFDFSIYIDADSSHIETWYIERFLSILKLAKRDPHNYYAQYAQLPRSEAIAFARNVWKTVNLENLEKFIEPTRNRAELILHKSADHKIDEIYLKK.

Residue 91-98 (GSVAVGKS) coordinates ATP.

The protein belongs to the prokaryotic pantothenate kinase family.

It localises to the cytoplasm. The enzyme catalyses (R)-pantothenate + ATP = (R)-4'-phosphopantothenate + ADP + H(+). It functions in the pathway cofactor biosynthesis; coenzyme A biosynthesis; CoA from (R)-pantothenate: step 1/5. The chain is Pantothenate kinase (coaA) from Streptococcus pyogenes serotype M1.